The following is a 955-amino-acid chain: Alpha-1,4 glucan phosphorylase L isozyme, chloroplastic/amyloplastic (955 aa).

Residues 1–43 constitute a chloroplast transit peptide; it reads MSRLSGITPRARDDRSQFQNPRLEIAVPDRTAGLQRTKRTLLV. Positions 522–550 are disordered; it reads KVVTESEKDELEEKDTELEKDEDPVPAPI. Residues 528-545 show a composition bias toward acidic residues; sequence EKDELEEKDTELEKDEDP. Residue Lys-801 is modified to N6-(pyridoxal phosphate)lysine.

Belongs to the glycogen phosphorylase family. Requires pyridoxal 5'-phosphate as cofactor.

The protein resides in the plastid. It localises to the chloroplast. It is found in the amyloplast. It carries out the reaction [(1-&gt;4)-alpha-D-glucosyl](n) + phosphate = [(1-&gt;4)-alpha-D-glucosyl](n-1) + alpha-D-glucose 1-phosphate. Phosphorylase is an important allosteric enzyme in carbohydrate metabolism. Enzymes from different sources differ in their regulatory mechanisms and in their natural substrates. However, all known phosphorylases share catalytic and structural properties. This chain is Alpha-1,4 glucan phosphorylase L isozyme, chloroplastic/amyloplastic, found in Ipomoea batatas (Sweet potato).